The following is a 156-amino-acid chain: Succinate dehydrogenase assembly factor 2-B, mitochondrial (156 aa).

The transit peptide at 1–24 directs the protein to the mitochondrion; it reads MLRQFIVSTVGRRLQLPMMAQSRL.

This sequence belongs to the SDHAF2 family. As to quaternary structure, interacts with the flavoprotein subunit within the SDH catalytic dimer.

It localises to the mitochondrion matrix. Its function is as follows. Plays an essential role in the assembly of succinate dehydrogenase (SDH), an enzyme complex (also referred to as respiratory complex II) that is a component of both the tricarboxylic acid (TCA) cycle and the mitochondrial electron transport chain, and which couples the oxidation of succinate to fumarate with the reduction of ubiquinone (coenzyme Q) to ubiquinol. Required for flavinylation (covalent attachment of FAD) of the flavoprotein subunit of the SDH catalytic dimer. This Drosophila melanogaster (Fruit fly) protein is Succinate dehydrogenase assembly factor 2-B, mitochondrial.